The following is a 107-amino-acid chain: Conantokin-R (107 aa).

The N-terminal stretch at 1-24 (MQLYTYLYLLVSLVTFYLILGTGT) is a signal peptide. The propeptide occupies 25-80 (LGHGGALTERRSTDATALKPEPVLLQKSSARSTDDNGNDRLTQMKRILKKRGNKAR). The disordered stretch occupies residues 26 to 64 (GHGGALTERRSTDATALKPEPVLLQKSSARSTDDNGNDR). Glutamate 83, glutamate 84, glutamate 91, and glutamate 95 each carry 4-carboxyglutamate. Positions 91 and 95 each coordinate a divalent metal cation. Cysteine 101 and cysteine 105 are joined by a disulfide.

It belongs to the conotoxin B superfamily. It depends on Ca(2+) as a cofactor. Mg(2+) is required as a cofactor. In terms of tissue distribution, expressed by the venom duct.

The protein resides in the secreted. In terms of biological role, conantokins inhibit N-methyl-D-aspartate (NMDA) receptors. This toxin is potent in the following order of preference: NR2B approximately NR2A/GRIN2A &gt; NR2C/GRIN2C &gt;&gt; NR2D/GRIN2D. Induces sleep-like symptoms in young mice. Is a highly potent anticonvulsant compound. The polypeptide is Conantokin-R (Conus radiatus (Rayed cone)).